The sequence spans 517 residues: GMP synthase [glutamine-hydrolyzing] (517 aa).

Positions 11-202 constitute a Glutamine amidotransferase type-1 domain; that stretch reads KIIVLDYGSQ…AFDVCHAEAN (192 aa). Catalysis depends on Cys-88, which acts as the Nucleophile. Catalysis depends on residues His-176 and Glu-178. Residues 203–392 form the GMPS ATP-PPase domain; the sequence is WSMDDFITKQ…LGMPHSLVWR (190 aa). 230–236 is a binding site for ATP; that stretch reads SGGVDSS.

Homodimer.

It carries out the reaction XMP + L-glutamine + ATP + H2O = GMP + L-glutamate + AMP + diphosphate + 2 H(+). The protein operates within purine metabolism; GMP biosynthesis; GMP from XMP (L-Gln route): step 1/1. In terms of biological role, catalyzes the synthesis of GMP from XMP. This is GMP synthase [glutamine-hydrolyzing] (guaA) from Lacticaseibacillus rhamnosus (Lactobacillus rhamnosus).